The primary structure comprises 93 residues: Phosphoribosyl-ATP pyrophosphatase (93 aa).

This sequence belongs to the PRA-PH family.

The protein resides in the cytoplasm. It catalyses the reaction 1-(5-phospho-beta-D-ribosyl)-ATP + H2O = 1-(5-phospho-beta-D-ribosyl)-5'-AMP + diphosphate + H(+). It participates in amino-acid biosynthesis; L-histidine biosynthesis; L-histidine from 5-phospho-alpha-D-ribose 1-diphosphate: step 2/9. The polypeptide is Phosphoribosyl-ATP pyrophosphatase (Rhodococcus erythropolis (strain PR4 / NBRC 100887)).